The following is an 805-amino-acid chain: Cation channel sperm-associated auxiliary subunit delta (805 aa).

The first 16 residues, Met1–Ala16, serve as a signal peptide directing secretion. The Extracellular segment spans residues His17 to Leu723. 7 cysteine pairs are disulfide-bonded: Cys20–Cys366, Cys56–Cys143, Cys142–Cys149, Cys384–Cys493, Cys507–Cys701, Cys522–Cys569, and Cys621–Cys651. N-linked (GlcNAc...) asparagine glycans are attached at residues Asn227, Asn419, Asn469, Asn535, and Asn627. The chain crosses the membrane as a helical span at residues Leu724–Lys745. Residues Gln746–Thr805 lie on the Cytoplasmic side of the membrane.

It belongs to the CATSPERD family. In terms of assembly, component of the CatSper complex or CatSpermasome composed of the core pore-forming members CATSPER1, CATSPER2, CATSPER3 and CATSPER4 as well as auxiliary members CATSPERB, CATSPERG2, CATSPERD, CATSPERE, CATSPERZ, C2CD6/CATSPERT, SLCO6C1, TMEM249, TMEM262 and EFCAB9. HSPA1 may be an additional auxiliary complex member. The core complex members CATSPER1, CATSPER2, CATSPER3 and CATSPER4 form a heterotetrameric channel. The auxiliary CATSPERB, CATSPERG2, CATSPERD and CATSPERE subunits form a pavilion-like structure over the pore which stabilizes the complex through interactions with CATSPER4, CATSPER3, CATSPER1 and CATSPER2 respectively. SLCO6C1 interacts with CATSPERE and TMEM262/CATSPERH interacts with CATSPERB, further stabilizing the complex. C2CD6/CATSPERT interacts at least with CATSPERD and is required for targeting the CatSper complex in the flagellar membrane. As to expression, testis-specific.

The protein resides in the cell projection. It localises to the cilium. It is found in the flagellum membrane. Auxiliary component of the CatSper complex, a complex involved in sperm cell hyperactivation. Sperm cell hyperactivation is needed for sperm motility which is essential late in the preparation of sperm for fertilization. Required for CATSPER1 stability before intraflagellar transport and/or incorporation of the CatSper complex channel into the flagellar membrane. The protein is Cation channel sperm-associated auxiliary subunit delta of Mus musculus (Mouse).